We begin with the raw amino-acid sequence, 393 residues long: Putative amino-acid ABC transporter permease protein YhdX (393 aa).

8 consecutive transmembrane segments (helical) span residues 21–41, 92–112, 128–148, 180–200, 219–239, 256–276, 333–353, and 363–383; these read AWLF…WLFH, LLVS…IGLA, IEIF…FAVL, DGFI…VGLF, IAAV…GAAL, VLIP…SAFI, SSLA…GTVL, and IAMT…LMNI. Positions 88–381 constitute an ABC transmembrane type-1 domain; sequence LLNTLLVSAL…IISLTISLLM (294 aa).

This sequence belongs to the binding-protein-dependent transport system permease family. HisMQ subfamily.

Its subcellular location is the cell inner membrane. Its function is as follows. Probably part of the binding-protein-dependent transport system YdhWXYZ for an amino acid; probably responsible for the translocation of the substrate across the membrane. The polypeptide is Putative amino-acid ABC transporter permease protein YhdX (yhdX) (Escherichia coli (strain K12)).